Here is a 167-residue protein sequence, read N- to C-terminus: MKKQKNNKKKNIEKRNIEKRNIEEKNNEDLEELENAIYTYHKKELLAFFLEKTRIGHDKEEYKRFQSLLYKLDIECLEFAISRFSHIDIIHDHSKYVPAFIPLFAAYLTMFFNFYEKHWGALSFAAGTIAAIVWIIAVERKHRNQAISIMKIFEQVKERKVKDRSKD.

A run of 2 helical transmembrane segments spans residues 96–115 and 119–138; these read YVPA…FNFY and WGAL…IIAV.

Its subcellular location is the cell membrane. This is an uncharacterized protein from Bacillus subtilis (strain 168).